Here is a 102-residue protein sequence, read N- to C-terminus: Defensin (102 aa).

The N-terminal stretch at 1-25 (MKCATIVCTIAVVLAATLLNGSVQA) is a signal peptide. Positions 26-62 (APQEEAALSGGANLNTLLDELPEETHHAALENYRAKR) are excised as a propeptide. 3 disulfides stabilise this stretch: C65/C92, C78/C98, and C82/C100.

This sequence belongs to the invertebrate defensin family. Type 1 subfamily.

The protein resides in the secreted. In terms of biological role, responsible for the anti Gram-positive activity of immune hemolymph. This chain is Defensin (Def1), found in Anopheles gambiae (African malaria mosquito).